The following is a 490-amino-acid chain: MARFELQKLYIDGGYVDASNTETFDSINPANGEVLAKIQRASKEDVERAVVAAEKGQKIWAAMTAVERSRILRRAVDILRERNDELAALETLDTGKAISETRYVDIVTGADVLEYYAGLVPAIEGEQIPLRDSSFVYTRREPLGVVAGIGAWNYPIQIALWKSAPALAAGNAMIFKPSEVTSLTTLKLAEIYTEAGVPNGVFNVLTGSGREVGTWITEHPRIEKVSFTGGTDTGKKVMASASSSSLKEVTMELGGKSPLIVFDDADLDRAADIAMMANFYSSGQVCTNGTRVFVPNALKGEFEAKILERVKRIRPGNPEDENINFGPLVSFEHMESVLGYIAKGKEQGARLLCGGDRLTGGVFDKGAFVAATVFTDCTDEMTIVREEIFGPVMSILGYDTEDEVVRRANDTDFGLAAGIVTRDLNRAHRVIHLLEAGICWINAWGESAAQMPVGGYKQSGVGRENGISSLAQYTRIKSVQIELGDYASVF.

Residues Ser-26, Ile-27, and Asp-93 each contribute to the K(+) site. 150-152 (GAW) lines the NAD(+) pocket. Lys-162 functions as the Charge relay system in the catalytic mechanism. 176–179 (KPSE) is a binding site for NAD(+). Residue Val-180 participates in K(+) binding. 230–233 (GTDT) provides a ligand contact to NAD(+). Leu-246 provides a ligand contact to K(+). Glu-252 serves as the catalytic Proton acceptor. NAD(+)-binding residues include Gly-254, Cys-286, and Glu-387. The active-site Nucleophile is Cys-286. Cys-286 is modified (cysteine sulfenic acid (-SOH)). The K(+) site is built by Lys-457 and Gly-460. Glu-464 functions as the Charge relay system in the catalytic mechanism.

It belongs to the aldehyde dehydrogenase family. In terms of assembly, dimer of dimers. It depends on K(+) as a cofactor.

The catalysed reaction is betaine aldehyde + NAD(+) + H2O = glycine betaine + NADH + 2 H(+). The protein operates within amine and polyamine biosynthesis; betaine biosynthesis via choline pathway; betaine from betaine aldehyde: step 1/1. Functionally, involved in the biosynthesis of the osmoprotectant glycine betaine. Catalyzes the irreversible oxidation of betaine aldehyde to the corresponding acid. The protein is Betaine aldehyde dehydrogenase of Pseudomonas syringae pv. tomato (strain ATCC BAA-871 / DC3000).